The chain runs to 395 residues: Succinyl-diaminopimelate desuccinylase (395 aa).

Histidine 74 serves as a coordination point for Zn(2+). Residue aspartate 76 is part of the active site. Aspartate 107 provides a ligand contact to Zn(2+). Catalysis depends on glutamate 141, which acts as the Proton acceptor. Residues glutamate 142, glutamate 170, and histidine 368 each coordinate Zn(2+).

It belongs to the peptidase M20A family. DapE subfamily. In terms of assembly, homodimer. Zn(2+) serves as cofactor. Co(2+) is required as a cofactor.

The enzyme catalyses N-succinyl-(2S,6S)-2,6-diaminopimelate + H2O = (2S,6S)-2,6-diaminopimelate + succinate. It participates in amino-acid biosynthesis; L-lysine biosynthesis via DAP pathway; LL-2,6-diaminopimelate from (S)-tetrahydrodipicolinate (succinylase route): step 3/3. Functionally, catalyzes the hydrolysis of N-succinyl-L,L-diaminopimelic acid (SDAP), forming succinate and LL-2,6-diaminopimelate (DAP), an intermediate involved in the bacterial biosynthesis of lysine and meso-diaminopimelic acid, an essential component of bacterial cell walls. The sequence is that of Succinyl-diaminopimelate desuccinylase from Chelativorans sp. (strain BNC1).